The following is a 390-amino-acid chain: Phosphopentomutase (390 aa).

Mn(2+) contacts are provided by aspartate 9, aspartate 283, histidine 288, aspartate 324, histidine 325, and histidine 336.

Belongs to the phosphopentomutase family. Requires Mn(2+) as cofactor.

It localises to the cytoplasm. The enzyme catalyses 2-deoxy-alpha-D-ribose 1-phosphate = 2-deoxy-D-ribose 5-phosphate. It carries out the reaction alpha-D-ribose 1-phosphate = D-ribose 5-phosphate. It participates in carbohydrate degradation; 2-deoxy-D-ribose 1-phosphate degradation; D-glyceraldehyde 3-phosphate and acetaldehyde from 2-deoxy-alpha-D-ribose 1-phosphate: step 1/2. Functionally, isomerase that catalyzes the conversion of deoxy-ribose 1-phosphate (dRib-1-P) and ribose 1-phosphate (Rib-1-P) to deoxy-ribose 5-phosphate (dRib-5-P) and ribose 5-phosphate (Rib-5-P), respectively. The sequence is that of Phosphopentomutase from Thermotoga petrophila (strain ATCC BAA-488 / DSM 13995 / JCM 10881 / RKU-1).